A 675-amino-acid chain; its full sequence is MACSTLPKSPKDKIDPRDLLIPLILFLSLKGARSAAPGSSPHQVYNITWEVTNGDRETVWAISGNHPLWTWWPVLTPDLCMLALSGPPHWGLEYQAPYSSPPGPPCCSGSSGSSAGCSRDCDEPLTSLTPRCNTAWNRLKLDQVTHKSSEGFYVCPGSHRPREAKSCGGPDSFYCASWGCETTGRVYWKPSSSWDYITVDNNLTTSQAVQVCKDNKWCNPLAIQFTNAGKQVTSWTTGHYWGLRLYVSGRDPGLTFGIRLRYQNLGPRVPIGPNPVLADQLSLPRPNPLPKPAKSPPASNSTPTLISPSPTPTQPPPAGTGDRLLNLVQGAYQALNLTNPDKTQECWLCLVSGPPYYEGVAVLGTYSNHTSAPANCSVASQHKLTLSEVTGRGLCIGTVPKTHQALCNTTLKIDKGSYYLVAPTGTTWACNTGLTPCLSATVLNRTTDYCVLVELWPRVTYHPPSYVYSQFEKSYRHKREPVSLTLALLLGGLTMGGIAAGVGTGTTALVATQQFQQLHAAVQDDLKEVEKSITNLEKSLTSLSEVVLQNRRGLDLLFLKEGGLCAALKEECCFYADHTGLVRDSMAKLRERLTQRQKLFESSQGWFEGLFNRSPWFTTLISTIMGPLIILLLILLFGPCILNRLVQFVKDRISVVQALVLTQQYHQLKPLEYEP.

The N-terminal stretch at 1-34 (MACSTLPKSPKDKIDPRDLLIPLILFLSLKGARS) is a signal peptide. The segment at 35–270 (AAPGSSPHQV…RYQNLGPRVP (236 aa)) is receptor-binding domain (RBD). Topologically, residues 35–620 (AAPGSSPHQV…FNRSPWFTTL (586 aa)) are extracellular. An N-linked (GlcNAc...) asparagine; by host glycan is attached at N46. Cystine bridges form between C80/C132, C106/C121, C107/C117, C155/C175, and C167/C180. H89 lines the Zn(2+) pocket. D120 is a Zn(2+) binding site. An N-linked (GlcNAc...) asparagine; by host glycan is attached at N202. C212 and C218 form a disulfide bridge. The disordered stretch occupies residues 276–323 (VLADQLSLPRPNPLPKPAKSPPASNSTPTLISPSPTPTQPPPAGTGDR). The span at 285–295 (RPNPLPKPAKS) shows a compositional bias: pro residues. The segment covering 296-308 (PPASNSTPTLISP) has biased composition (low complexity). Over residues 309–318 (SPTPTQPPPA) the composition is skewed to pro residues. Residue N336 is glycosylated (N-linked (GlcNAc...) asparagine; by host). Cystine bridges form between C346–C349, C346–C573, C376–C430, C395–C407, C437–C450, and C565–C572. A CXXC motif is present at residues 346-349 (CWLC). N-linked (GlcNAc...) asparagine; by host glycosylation is found at N368 and N375. N-linked (GlcNAc...) asparagine; by host glycosylation is found at N408 and N444. The fusion peptide stretch occupies residues 482-502 (VSLTLALLLGGLTMGGIAAGV). Residues 513 to 547 (QQFQQLHAAVQDDLKEVEKSITNLEKSLTSLSEVV) adopt a coiled-coil conformation. The segment at 548-564 (LQNRRGLDLLFLKEGGL) is immunosuppression. The CX6CC motif lies at 565 to 573 (CAALKEECC). The helical transmembrane segment at 621-641 (ISTIMGPLIILLLILLFGPCI) threads the bilayer. C640 carries the S-palmitoyl cysteine; by host lipid modification. Topologically, residues 642–675 (LNRLVQFVKDRISVVQALVLTQQYHQLKPLEYEP) are cytoplasmic. Positions 665-668 (YHQL) match the YXXL motif; contains endocytosis signal motif.

In terms of assembly, the mature envelope protein (Env) consists of a trimer of SU-TM heterodimers attached by a labile interchain disulfide bond. In terms of processing, specific enzymatic cleavages in vivo yield mature proteins. Envelope glycoproteins are synthesized as an inactive precursor that is N-glycosylated and processed likely by host cell furin or by a furin-like protease in the Golgi to yield the mature SU and TM proteins. The cleavage site between SU and TM requires the minimal sequence [KR]-X-[KR]-R. The R-peptide is released from the C-terminus of the cytoplasmic tail of the TM protein upon particle formation as a result of proteolytic cleavage by the viral protease. Cleavage of this peptide is required for TM to become fusogenic. Post-translationally, the CXXC motif is highly conserved across a broad range of retroviral envelope proteins. It is thought to participate in the formation of a labile disulfide bond possibly with the CX6CC motif present in the transmembrane protein. Isomerization of the intersubunit disulfide bond to an SU intrachain disulfide bond is thought to occur upon receptor recognition in order to allow membrane fusion. The transmembrane protein is palmitoylated. In terms of processing, the R-peptide is palmitoylated.

Its subcellular location is the virion membrane. The protein resides in the host cell membrane. In terms of biological role, the surface protein (SU) attaches the virus to the host cell by binding to its receptor. This interaction triggers the refolding of the transmembrane protein (TM) and is thought to activate its fusogenic potential by unmasking its fusion peptide. Fusion occurs at the host cell plasma membrane. The transmembrane protein (TM) acts as a class I viral fusion protein. Under the current model, the protein has at least 3 conformational states: pre-fusion native state, pre-hairpin intermediate state, and post-fusion hairpin state. During viral and target cell membrane fusion, the coiled coil regions (heptad repeats) assume a trimer-of-hairpins structure, positioning the fusion peptide in close proximity to the C-terminal region of the ectodomain. The formation of this structure appears to drive apposition and subsequent fusion of viral and target cell membranes. Membranes fusion leads to delivery of the nucleocapsid into the cytoplasm. This Mus musculus (Mouse) protein is Envelope glycoprotein (env).